The following is a 418-amino-acid chain: Glutamyl-tRNA reductase (418 aa).

Substrate contacts are provided by residues Thr49 to Arg52, Ser105, Glu110 to Gln112, and Gln116. The active-site Nucleophile is the Cys50. Residue Gly185 to Ile190 participates in NADP(+) binding.

It belongs to the glutamyl-tRNA reductase family. Homodimer.

The enzyme catalyses (S)-4-amino-5-oxopentanoate + tRNA(Glu) + NADP(+) = L-glutamyl-tRNA(Glu) + NADPH + H(+). Its pathway is porphyrin-containing compound metabolism; protoporphyrin-IX biosynthesis; 5-aminolevulinate from L-glutamyl-tRNA(Glu): step 1/2. Functionally, catalyzes the NADPH-dependent reduction of glutamyl-tRNA(Glu) to glutamate 1-semialdehyde (GSA). The sequence is that of Glutamyl-tRNA reductase from Aromatoleum aromaticum (strain DSM 19018 / LMG 30748 / EbN1) (Azoarcus sp. (strain EbN1)).